A 147-amino-acid chain; its full sequence is DNA-directed RNA polymerase RPB6 homolog (147 aa).

This sequence belongs to the archaeal RpoK/eukaryotic RPB6 RNA polymerase subunit family. Part of the viral DNA-directed RNA polymerase that consists of 8 polII-like subunits (RPB1, RPB2, RPB3, RPB5, RPB6, RPB7, RPB9, RPB10), a capping enzyme and a termination factor.

The protein resides in the host cytoplasm. It is found in the virion. In terms of biological role, component of the DNA-directed RNA polymerase (RNAP) that catalyzes the transcription in the cytoplasm of viral DNA into RNA using the four ribonucleoside triphosphates as substrates. This Ornithodoros (relapsing fever ticks) protein is DNA-directed RNA polymerase RPB6 homolog.